The following is a 455-amino-acid chain: Chromosomal replication initiator protein DnaA 2 (455 aa).

The domain I, interacts with DnaA modulators stretch occupies residues 1–95 (MLTCNDCSTW…KRSSPQIAAS (95 aa)). Residues 96 to 112 (VTKPAVEVSEENKDFQL) are domain II. Positions 113 to 328 (KLNGAYRFDN…GAINKLTAYC (216 aa)) are domain III, AAA+ region. Gly-157, Gly-159, Lys-160, and Thr-161 together coordinate ATP. The interval 329-455 (LLFNKPLTET…IAIDSPQHFV (127 aa)) is domain IV, binds dsDNA.

Belongs to the DnaA family. As to quaternary structure, oligomerizes as a right-handed, spiral filament on DNA at oriC.

Its subcellular location is the cytoplasm. In terms of biological role, plays an essential role in the initiation and regulation of chromosomal replication. ATP-DnaA binds to the origin of replication (oriC) to initiate formation of the DNA replication initiation complex once per cell cycle. Binds the DnaA box (a 9 base pair repeat at the origin) and separates the double-stranded (ds)DNA. Forms a right-handed helical filament on oriC DNA; dsDNA binds to the exterior of the filament while single-stranded (ss)DNA is stabiized in the filament's interior. The ATP-DnaA-oriC complex binds and stabilizes one strand of the AT-rich DNA unwinding element (DUE), permitting loading of DNA polymerase. After initiation quickly degrades to an ADP-DnaA complex that is not apt for DNA replication. Binds acidic phospholipids. This chain is Chromosomal replication initiator protein DnaA 2, found in Chlamydia muridarum (strain MoPn / Nigg).